The primary structure comprises 625 residues: Isocitrate dehydrogenase kinase/phosphatase (625 aa).

Residues 325 to 331 (APGIKGM) and Lys-346 each bind ATP. The active site involves Asp-381. The tract at residues 596-625 (RRHSPGRNDHELLTHLPPEPMLTGLSGMTP) is disordered.

It belongs to the AceK family.

The protein localises to the cytoplasm. It catalyses the reaction L-seryl-[isocitrate dehydrogenase] + ATP = O-phospho-L-seryl-[isocitrate dehydrogenase] + ADP + H(+). Its function is as follows. Bifunctional enzyme which can phosphorylate or dephosphorylate isocitrate dehydrogenase (IDH) on a specific serine residue. This is a regulatory mechanism which enables bacteria to bypass the Krebs cycle via the glyoxylate shunt in response to the source of carbon. When bacteria are grown on glucose, IDH is fully active and unphosphorylated, but when grown on acetate or ethanol, the activity of IDH declines drastically concomitant with its phosphorylation. The polypeptide is Isocitrate dehydrogenase kinase/phosphatase (Polaromonas sp. (strain JS666 / ATCC BAA-500)).